A 141-amino-acid polypeptide reads, in one-letter code: Alpha-lactalbumin (141 aa).

Residues 1–19 form the signal peptide; it reads MMSFVSLLVVGILFPAIQA. The region spanning 20–141 is the C-type lysozyme domain; sequence KQFTKCELSQ…KLDQWLCEKM (122 aa). Disulfide bonds link C25–C138, C47–C129, C80–C95, and C91–C109. 5 residues coordinate Ca(2+): K97, D100, D102, D105, and D106.

Belongs to the glycosyl hydrolase 22 family. As to quaternary structure, lactose synthase (LS) is a heterodimer of a catalytic component, beta1,4-galactosyltransferase (beta4Gal-T1) and a regulatory component, alpha-lactalbumin (LA). In terms of tissue distribution, mammary gland specific. Secreted in milk.

Its subcellular location is the secreted. Its function is as follows. Regulatory subunit of lactose synthase, changes the substrate specificity of galactosyltransferase in the mammary gland making glucose a good acceptor substrate for this enzyme. This enables LS to synthesize lactose, the major carbohydrate component of milk. In other tissues, galactosyltransferase transfers galactose onto the N-acetylglucosamine of the oligosaccharide chains in glycoproteins. This is Alpha-lactalbumin (LALBA) from Sus scrofa (Pig).